The following is a 68-amino-acid chain: Cytochrome c3 (68 aa).

Residues His-17, His-20, Cys-26, Cys-29, His-30, His-45, Cys-49, Cys-52, His-53, Cys-62, Cys-65, and His-66 each contribute to the heme site.

Post-translationally, binds 3 heme groups per subunit.

Participates in sulfate respiration coupled with phosphorylation by transferring electrons from the enzyme dehydrogenase to ferredoxin. In Desulfuromonas acetoxidans (Chloropseudomonas ethylica), this protein is Cytochrome c3 (cyd).